A 174-amino-acid chain; its full sequence is NADH-quinone oxidoreductase subunit C (174 aa).

Belongs to the complex I 30 kDa subunit family. NDH-1 is composed of 14 different subunits. Subunits NuoB, C, D, E, F, and G constitute the peripheral sector of the complex.

The protein resides in the cell membrane. The catalysed reaction is a quinone + NADH + 5 H(+)(in) = a quinol + NAD(+) + 4 H(+)(out). NDH-1 shuttles electrons from NADH, via FMN and iron-sulfur (Fe-S) centers, to quinones in the respiratory chain. The immediate electron acceptor for the enzyme in this species is believed to be ubiquinone. Couples the redox reaction to proton translocation (for every two electrons transferred, four hydrogen ions are translocated across the cytoplasmic membrane), and thus conserves the redox energy in a proton gradient. The protein is NADH-quinone oxidoreductase subunit C of Roseiflexus sp. (strain RS-1).